A 905-amino-acid chain; its full sequence is Probable aromatic-L-amino-acid decarboxylase (905 aa).

Residues 250–296 (YLNPIIKTPPHNERVPKMKTNISKTRKKKGKVSDASKDSRPSETKKE) are disordered. Residues 280–296 (KVSDASKDSRPSETKKE) show a composition bias toward basic and acidic residues. Thr-492 and Ser-591 together coordinate pyridoxal 5'-phosphate. Lys-648 is modified (N6-(pyridoxal phosphate)lysine). The tract at residues 861–905 (HTAEYADPPGKSNKSPQVAAKGELPSAAPPSSRTPNSDISEKSDR) is disordered. Over residues 889 to 898 (PPSSRTPNSD) the composition is skewed to polar residues.

Belongs to the group II decarboxylase family. Homodimer. It depends on pyridoxal 5'-phosphate as a cofactor.

The enzyme catalyses L-dopa + H(+) = dopamine + CO2. The catalysed reaction is 5-hydroxy-L-tryptophan + H(+) = serotonin + CO2. It participates in catecholamine biosynthesis; dopamine biosynthesis; dopamine from L-tyrosine: step 2/2. Its function is as follows. Catalyzes the decarboxylation of L-3,4-dihydroxyphenylalanine (DOPA) to dopamine, L-5-hydroxytryptophan to serotonin and L-tryptophan to tryptamine. The chain is Probable aromatic-L-amino-acid decarboxylase (hdl-1) from Caenorhabditis elegans.